A 319-amino-acid polypeptide reads, in one-letter code: Olfactory receptor 2S2 (319 aa).

Residues 1–26 are Extracellular-facing; the sequence is MEKANETSPVMGFVLLRLSAHPELEK. Residue Asn5 is glycosylated (N-linked (GlcNAc...) asparagine). Residues 27-50 form a helical membrane-spanning segment; it reads TFFVLILLMYLVILLGNGVLILVT. At 51 to 58 the chain is on the cytoplasmic side; the sequence is ILDSRLHT. Residues 59–80 form a helical membrane-spanning segment; sequence PMYFFLGNLSFLDICFTTSSVP. Residues 81-101 lie on the Extracellular side of the membrane; it reads LVLDSFLTPQETISFSACAVQ. An intrachain disulfide couples Cys98 to Cys190. Residues 102 to 121 form a helical membrane-spanning segment; sequence MALSFAMAGTECLLLSMMAF. The Cytoplasmic segment spans residues 122–140; that stretch reads DRYVAICNPLRYSVIMSKA. A helical membrane pass occupies residues 141–159; it reads AYMPMAASSWAIGGAASVV. Over 160–196 the chain is Extracellular; it reads HTSLAIQLPFCGDNVINHFTCEILAVLKLACADISIN. A helical membrane pass occupies residues 197–220; that stretch reads VISMEVTNVIFLGVPVLFISFSYV. The Cytoplasmic portion of the chain corresponds to 221–237; sequence FIITTILRIPSAEGRKK. A helical membrane pass occupies residues 238–260; the sequence is VFSTCSAHLTVVIVFYGTLFFMY. Residues 261–279 lie on the Extracellular side of the membrane; the sequence is GKPKSKDSMGADKEDLSDK. The chain crosses the membrane as a helical span at residues 280–299; the sequence is LIPLFYGVVTPMLNPIIYSL. Residues 300–319 lie on the Cytoplasmic side of the membrane; the sequence is RNKDVKAAVRRLLRPKGFTQ.

Belongs to the G-protein coupled receptor 1 family.

It localises to the cell membrane. Odorant receptor. The protein is Olfactory receptor 2S2 (OR2S2) of Homo sapiens (Human).